Here is a 332-residue protein sequence, read N- to C-terminus: Myogenic-determination protein (332 aa).

Residues 22 to 54 are disordered; sequence HNGYGQPTHPGYGFSAYSQQNPIAHPGQNPHQT. One can recognise a bHLH domain in the interval 161 to 212; that stretch reads DRRKAATMRERRRLRKVNEAFEILKRRTSSNPNQRLPKVEILRNAIEYIESL. Positions 293–309 are enriched in polar residues; sequence TTSPIQNKATPSASDTQ. The disordered stretch occupies residues 293-332; the sequence is TTSPIQNKATPSASDTQSPPSSGATAPTSLHVNFKRKCST. Residues 310 to 321 are compositionally biased toward low complexity; the sequence is SPPSSGATAPTS.

Efficient DNA binding requires dimerization with another bHLH protein.

The protein localises to the nucleus. In terms of biological role, may play an important role in the early development of muscle. This is Myogenic-determination protein (nau) from Drosophila melanogaster (Fruit fly).